The following is a 429-amino-acid chain: Ribosomal RNA small subunit methyltransferase B (429 aa).

Residues 254 to 260, D277, D303, and D322 each bind S-adenosyl-L-methionine; that span reads CAAPGGK. The active-site Nucleophile is the C375.

This sequence belongs to the class I-like SAM-binding methyltransferase superfamily. RsmB/NOP family.

The protein localises to the cytoplasm. The enzyme catalyses cytidine(967) in 16S rRNA + S-adenosyl-L-methionine = 5-methylcytidine(967) in 16S rRNA + S-adenosyl-L-homocysteine + H(+). In terms of biological role, specifically methylates the cytosine at position 967 (m5C967) of 16S rRNA. This is Ribosomal RNA small subunit methyltransferase B from Escherichia coli O6:H1 (strain CFT073 / ATCC 700928 / UPEC).